The sequence spans 333 residues: MLTLTRICTVSYEVRSTFLFISVLEFAVGFLTNAFIFLVNFWDVVKRQPLSNSDCVLLCLSISRLFLHGLLFLSAIQLTHFQKLSEPLNHSYHAIIMLWMIANQANLWLATCLSLLYCSKLIRSSHTFLICLASWVSRKICQMLLGIILCSCICTVLCVWCYFSRPHFTVTTVLFTNNNTRLNWQIKDLNLFYSFLFCYLWSVPPFLLFLVSSGMLTVSLGRHMRTMKVYTRDFRDPSLEAHIKALKSLVSFFCFFVISSCAAFISVPLLILWRDKIGVMVCVGIMAACPSGHAAILISGNAKLRRAVTTILLWAQSSLKVRADHKADSRTLC.

The Extracellular segment spans residues 1–17 (MLTLTRICTVSYEVRST). A helical membrane pass occupies residues 18–38 (FLFISVLEFAVGFLTNAFIFL). Residues 39 to 55 (VNFWDVVKRQPLSNSDC) are Cytoplasmic-facing. A helical transmembrane segment spans residues 56–76 (VLLCLSISRLFLHGLLFLSAI). The Extracellular portion of the chain corresponds to 77 to 94 (QLTHFQKLSEPLNHSYHA). The helical transmembrane segment at 95 to 115 (IIMLWMIANQANLWLATCLSL) threads the bilayer. Topologically, residues 116-142 (LYCSKLIRSSHTFLICLASWVSRKICQ) are cytoplasmic. The chain crosses the membrane as a helical span at residues 143 to 163 (MLLGIILCSCICTVLCVWCYF). The Extracellular segment spans residues 164-190 (SRPHFTVTTVLFTNNNTRLNWQIKDLN). Asn-178 carries an N-linked (GlcNAc...) asparagine glycan. The chain crosses the membrane as a helical span at residues 191 to 211 (LFYSFLFCYLWSVPPFLLFLV). Topologically, residues 212–251 (SSGMLTVSLGRHMRTMKVYTRDFRDPSLEAHIKALKSLVS) are cytoplasmic. Residues 252–272 (FFCFFVISSCAAFISVPLLIL) form a helical membrane-spanning segment. The Extracellular segment spans residues 273–276 (WRDK). The chain crosses the membrane as a helical span at residues 277 to 297 (IGVMVCVGIMAACPSGHAAIL). At 298–333 (ISGNAKLRRAVTTILLWAQSSLKVRADHKADSRTLC) the chain is on the cytoplasmic side.

Belongs to the G-protein coupled receptor T2R family.

The protein localises to the membrane. Functionally, receptor that may play a role in the perception of bitterness and is gustducin-linked. May play a role in sensing the chemical composition of the gastrointestinal content. The activity of this receptor may stimulate alpha gustducin, mediate PLC-beta-2 activation and lead to the gating of TRPM5. The sequence is that of Taste receptor type 2 member 38 (TAS2R38) from Hylobates klossii (Kloss's gibbon).